A 276-amino-acid polypeptide reads, in one-letter code: Undecaprenyl-diphosphatase (276 aa).

Helical transmembrane passes span Leu-2–Ile-22, Phe-43–Tyr-63, Trp-83–Leu-103, Leu-111–Ile-131, Thr-147–Gly-167, Tyr-186–Leu-206, Leu-224–Leu-244, and Ala-255–Ala-275.

It belongs to the UppP family.

It localises to the cell membrane. The catalysed reaction is di-trans,octa-cis-undecaprenyl diphosphate + H2O = di-trans,octa-cis-undecaprenyl phosphate + phosphate + H(+). Its function is as follows. Catalyzes the dephosphorylation of undecaprenyl diphosphate (UPP). Confers resistance to bacitracin. The chain is Undecaprenyl-diphosphatase from Limosilactobacillus fermentum (strain NBRC 3956 / LMG 18251) (Lactobacillus fermentum).